We begin with the raw amino-acid sequence, 216 residues long: Superoxide dismutase [Mn], mitochondrial (216 aa).

A mitochondrion-targeting transit peptide spans 1-18; it reads MSFLNRNLSRTIKAAVRG. Mn(2+)-binding residues include histidine 44, histidine 92, aspartate 176, and histidine 180.

Belongs to the iron/manganese superoxide dismutase family. It depends on Mn(2+) as a cofactor.

It is found in the mitochondrion matrix. It carries out the reaction 2 superoxide + 2 H(+) = H2O2 + O2. Destroys superoxide anion radicals which are normally produced within the cells and which are toxic to biological systems. This chain is Superoxide dismutase [Mn], mitochondrial (Sod2), found in Glossina morsitans morsitans (Savannah tsetse fly).